Consider the following 906-residue polypeptide: Protein translocase subunit SecA (906 aa).

Residues Q89, 107 to 111 (GEGKT), and D502 contribute to the ATP site. The segment at 829–898 (EAPPEPELPP…ACPCGSGKKY (70 aa)) is disordered. Basic and acidic residues predominate over residues 858–877 (WSDHQHDERNVPAAERDPAD). Residues C890, C892, C901, and H902 each contribute to the Zn(2+) site.

It belongs to the SecA family. Monomer and homodimer. Part of the essential Sec protein translocation apparatus which comprises SecA, SecYEG and auxiliary proteins SecDF-YajC and YidC. Zn(2+) serves as cofactor.

It is found in the cell inner membrane. It localises to the cytoplasm. It catalyses the reaction ATP + H2O + cellular proteinSide 1 = ADP + phosphate + cellular proteinSide 2.. Its function is as follows. Part of the Sec protein translocase complex. Interacts with the SecYEG preprotein conducting channel. Has a central role in coupling the hydrolysis of ATP to the transfer of proteins into and across the cell membrane, serving both as a receptor for the preprotein-SecB complex and as an ATP-driven molecular motor driving the stepwise translocation of polypeptide chains across the membrane. The chain is Protein translocase subunit SecA from Brucella anthropi (strain ATCC 49188 / DSM 6882 / CCUG 24695 / JCM 21032 / LMG 3331 / NBRC 15819 / NCTC 12168 / Alc 37) (Ochrobactrum anthropi).